A 348-amino-acid polypeptide reads, in one-letter code: Propane 2-monooxygenase, reductase component (348 aa).

In terms of domain architecture, 2Fe-2S ferredoxin-type spans 5-95 (HKINFDPVDI…DCTIELLNFD (91 aa)). [2Fe-2S] cluster contacts are provided by cysteine 39, cysteine 44, cysteine 47, and cysteine 79. The FAD-binding FR-type domain occupies 105 to 206 (IQDVRTQVQA…TGPYGSFTLK (102 aa)).

The protein belongs to the bacterial ring-hydroxylating dioxygenase ferredoxin reductase family. As to quaternary structure, the propane 2-monooxygenase multicomponent enzyme system is composed of an electron transfer component and a monooxygenase component interacting with the effector protein MimD. The electron transfer component is composed of a reductase (MimB), and the monooxygenase component is formed by a large subunit (MimA) and a small subunit (MimC). FAD is required as a cofactor. Requires [2Fe-2S] cluster as cofactor.

Its function is as follows. Reductase component of the propane 2-monooxygenase multicomponent enzyme system which is involved in the degradation of propane via the O2-dependent hydroxylation of propane. Reductase catalyzes the transfer of electrons from NADH or NADPH to monooxygenase. The protein is Propane 2-monooxygenase, reductase component of Mycolicibacterium smegmatis (strain ATCC 700084 / mc(2)155) (Mycobacterium smegmatis).